Consider the following 245-residue polypeptide: 3-deoxy-manno-octulosonate cytidylyltransferase (245 aa).

This sequence belongs to the KdsB family.

Its subcellular location is the cytoplasm. The catalysed reaction is 3-deoxy-alpha-D-manno-oct-2-ulosonate + CTP = CMP-3-deoxy-beta-D-manno-octulosonate + diphosphate. The protein operates within nucleotide-sugar biosynthesis; CMP-3-deoxy-D-manno-octulosonate biosynthesis; CMP-3-deoxy-D-manno-octulosonate from 3-deoxy-D-manno-octulosonate and CTP: step 1/1. It functions in the pathway bacterial outer membrane biogenesis; lipopolysaccharide biosynthesis. Activates KDO (a required 8-carbon sugar) for incorporation into bacterial lipopolysaccharide in Gram-negative bacteria. The chain is 3-deoxy-manno-octulosonate cytidylyltransferase from Acidobacterium capsulatum (strain ATCC 51196 / DSM 11244 / BCRC 80197 / JCM 7670 / NBRC 15755 / NCIMB 13165 / 161).